The primary structure comprises 463 residues: Nuclear hormone receptor family member nhr-3 (463 aa).

Residues Ser-50–Pro-125 constitute a DNA-binding region (nuclear receptor). 2 NR C4-type zinc fingers span residues Cys-53–Cys-73 and Cys-89–Cys-113. Residues Asp-121–Gly-131 are compositionally biased toward basic and acidic residues. The segment at Asp-121 to Ser-143 is disordered. An NR LBD domain is found at Glu-199–Arg-462.

It belongs to the nuclear hormone receptor family.

Its subcellular location is the nucleus. Functionally, orphan nuclear receptor. The protein is Nuclear hormone receptor family member nhr-3 (nhr-3) of Caenorhabditis elegans.